A 359-amino-acid polypeptide reads, in one-letter code: Probable isoaspartyl peptidase/L-asparaginase 3 (359 aa).

The active-site Nucleophile is the Thr-224. Residues 252–255 (RVGD) and 275–278 (TGDG) contribute to the substrate site.

The protein belongs to the Ntn-hydrolase family. Heterotetramer of two alpha and two beta chains arranged as a dimer of alpha/beta heterodimers. Cleaved into an alpha and beta chain by autocatalysis; this activates the enzyme. The N-terminal residue of the beta subunit is responsible for the nucleophile hydrolase activity.

It catalyses the reaction Cleavage of a beta-linked Asp residue from the N-terminus of a polypeptide.. Its function is as follows. Acts in asparagine catabolism but also in the final steps of protein degradation via hydrolysis of a range of isoaspartyl dipeptides. The sequence is that of Probable isoaspartyl peptidase/L-asparaginase 3 from Arabidopsis thaliana (Mouse-ear cress).